We begin with the raw amino-acid sequence, 160 residues long: Large ribosomal subunit protein bL9 (160 aa).

Belongs to the bacterial ribosomal protein bL9 family.

Functionally, binds to the 23S rRNA. This is Large ribosomal subunit protein bL9 from Neorickettsia sennetsu (strain ATCC VR-367 / Miyayama) (Ehrlichia sennetsu).